The sequence spans 571 residues: Protein PNS1 (571 aa).

Residues 1–96 (MNDEEKHLAA…PDFPPDYNYK (96 aa)) are disordered. The Cytoplasmic segment spans residues 1–118 (MNDEEKHLAA…AVPKPKWNDK (118 aa)). Positions 15 to 31 (YQPNMHYQQQQEKQTGY) are enriched in polar residues. Composition is skewed to low complexity over residues 39-52 (QGGYNQNQNQDYYN) and 71-80 (GNPNDNYNNQ). The segment covering 81–90 (QPPPYTPDFP) has biased composition (pro residues). The helical transmembrane segment at 119–139 (IGLVILALIFSGYLALSIIVI) threads the bilayer. Residues 140 to 166 (RAYAQTHSFQGWGIYSGENDYSLNTHT) are Extracellular-facing. The helical transmembrane segment at 167–187 (LILYAFVLATAMVLSLLYFIA) threads the bilayer. Over 188-189 (AR) the chain is Cytoplasmic. A helical transmembrane segment spans residues 190-210 (VWTKQFIWITYILHLLFSWGT). Residue Ala211 is a topological domain, extracellular. A helical transmembrane segment spans residues 212-232 (IYYLVVGYYSAGIVFIVFAAL). Over 233 to 263 (TTWWFWCSRKRIPFATIVLQTLIDVTRANPS) the chain is Cytoplasmic. A helical transmembrane segment spans residues 264–284 (VLVISAVGTVVGACFGTWFSF). At 285–311 (TIVSIYVKYDPDNRNPGCMTTGGSCSN) the chain is on the extracellular side. Residues 312–332 (GKLIGLILFAIFCGYYLTEVI) form a helical membrane-spanning segment. At 333-369 (KNVIHVTISGVYGSWYYCSKSDQGMPKHAAMSSFRRA) the chain is on the cytoplasmic side. The chain crosses the membrane as a helical span at residues 370-390 (VTYSLGSISLGSLIVSIINFI). The Extracellular segment spans residues 391-406 (RQILSVLQQDARQSGD). A helical membrane pass occupies residues 407 to 427 (TLATVLLCFVQCCFGVLDWLV). Residues 428-472 (TYFNHYAYSYIALYGKAYVPSAKATWKLMQTRGIDAMVNDSLIGS) are Cytoplasmic-facing. The chain crosses the membrane as a helical span at residues 473–493 (VLSFGASFVAYAAALVAYCFL). Residues 494-503 (KYTDPSYNSG) are Extracellular-facing. A helical membrane pass occupies residues 504–524 (GGFYAPVVGLAFVIALQVSNI). The Cytoplasmic segment spans residues 525–571 (TNVSLKSGCSTFFLALARDPEVLRVSYPQIYEEICRTYPPARDKLDI).

This sequence belongs to the CTL (choline transporter-like) family.

The protein localises to the cell membrane. In terms of biological role, probably involved in transport through the plasma membrane. This is Protein PNS1 (PNS1) from Yarrowia lipolytica (strain CLIB 122 / E 150) (Yeast).